Consider the following 704-residue polypeptide: Polyribonucleotide nucleotidyltransferase (704 aa).

Asp-487 and Asp-493 together coordinate Mg(2+). The 60-residue stretch at 554 to 613 (PRLLTIKIHPDKIREVIGKGGSTIQAITKETGTQIDIQDDGTIIIASVNAIAAQAAKSRI) folds into the KH domain. The 69-residue stretch at 623–691 (GRIYEGKVAK…KQGRIRLSIK (69 aa)) folds into the S1 motif domain.

This sequence belongs to the polyribonucleotide nucleotidyltransferase family. Component of the RNA degradosome, which is a multiprotein complex involved in RNA processing and mRNA degradation. Requires Mg(2+) as cofactor.

It is found in the cytoplasm. The enzyme catalyses RNA(n+1) + phosphate = RNA(n) + a ribonucleoside 5'-diphosphate. Its function is as follows. Involved in mRNA degradation. Catalyzes the phosphorolysis of single-stranded polyribonucleotides processively in the 3'- to 5'-direction. The chain is Polyribonucleotide nucleotidyltransferase from Xanthomonas axonopodis pv. citri (strain 306).